Consider the following 296-residue polypeptide: Cation-efflux pump FieF (296 aa).

The Cytoplasmic portion of the chain corresponds to methionine 1–serine 18. A helical transmembrane segment spans residues valine 19–alanine 32. Over tryptophan 33–alanine 43 the chain is Periplasmic. Residues serine 44 to isoleucine 60 form a helical membrane-spanning segment. Zn(2+)-binding residues include aspartate 47, aspartate 51, aspartate 70, histidine 73, and histidine 77. Residues alanine 61–leucine 83 are Cytoplasmic-facing. Residues alanine 84 to glutamate 105 form a helical membrane-spanning segment. Residues arginine 106–glycine 119 lie on the Periplasmic side of the membrane. A helical membrane pass occupies residues valine 120 to lysine 138. Topologically, residues arginine 139 to asparagine 145 are cytoplasmic. A helical transmembrane segment spans residues serine 146 to leucine 160. Zn(2+) is bound by residues histidine 155 and aspartate 159. Over phenylalanine 161–alanine 180 the chain is Periplasmic. The chain crosses the membrane as a helical span at residues aspartate 181–glycine 200. The Cytoplasmic segment spans residues tyrosine 201 to glutamine 296. Residues histidine 234, aspartate 235, histidine 250, histidine 263, histidine 285, and aspartate 287 each contribute to the Zn(2+) site.

It belongs to the cation diffusion facilitator (CDF) transporter (TC 2.A.4) family. FieF subfamily. In terms of assembly, homodimer. The subunits are held together in a parallel orientation through zinc binding at the interface of the cytoplasmic domains.

The protein resides in the cell inner membrane. The enzyme catalyses Zn(2+)(in) + H(+)(out) = Zn(2+)(out) + H(+)(in). The catalysed reaction is Cd(2+)(in) + H(+)(out) = Cd(2+)(out) + H(+)(in). It carries out the reaction Fe(2+)(in) + H(+)(out) = Fe(2+)(out) + H(+)(in). Its activity is regulated as follows. Cytoplasmic zinc binding may trigger movements of two electrically repulsive cytoplasmic domains and reorient transmembrane helices, thereby modulating coordination geometry of the active site for zinc transport. It may modulate activity in response to cytoplasmic metal fluctuations. In terms of biological role, divalent metal cation transporter which exports Zn(2+), Cd(2+) and possibly Fe(2+). Zn(2+)/H(+) antiporter capable of using the proton motive force to remove Zn(2+) from the cytoplasm. May be involved in zinc and iron detoxification by efflux. The chain is Cation-efflux pump FieF from Shewanella oneidensis (strain ATCC 700550 / JCM 31522 / CIP 106686 / LMG 19005 / NCIMB 14063 / MR-1).